The chain runs to 349 residues: ATPase GET3 (349 aa).

ATP is bound at residue 26–33 (KGGVGKTT). Asp57 is an active-site residue. Positions 240 and 267 each coordinate ATP. Zn(2+) contacts are provided by Cys280 and Cys283.

Belongs to the arsA ATPase family. Homodimer. Component of the Golgi to ER traffic (GET) complex, which is composed of GET1, GET2 and GET3. Within the complex, GET1 and GET2 form a heterotetramer which is stabilized by phosphatidylinositol binding and which binds to the GET3 homodimer. Interacts with the chloride channel protein GEF1.

The protein resides in the cytoplasm. Its subcellular location is the endoplasmic reticulum. It is found in the golgi apparatus. In terms of biological role, ATPase required for the post-translational delivery of tail-anchored (TA) proteins to the endoplasmic reticulum. Recognizes and selectively binds the transmembrane domain of TA proteins in the cytosol. This complex then targets to the endoplasmic reticulum by membrane-bound receptors GET1 and GET2, where the tail-anchored protein is released for insertion. This process is regulated by ATP binding and hydrolysis. ATP binding drives the homodimer towards the closed dimer state, facilitating recognition of newly synthesized TA membrane proteins. ATP hydrolysis is required for insertion. Subsequently, the homodimer reverts towards the open dimer state, lowering its affinity for the GET1-GET2 receptor, and returning it to the cytosol to initiate a new round of targeting. Cooperates with the HDEL receptor ERD2 to mediate the ATP-dependent retrieval of resident ER proteins that contain a C-terminal H-D-E-L retention signal from the Golgi to the ER. Involved in low-level resistance to the oxyanions arsenite and arsenate, and in heat tolerance. The sequence is that of ATPase GET3 from Kluyveromyces lactis (strain ATCC 8585 / CBS 2359 / DSM 70799 / NBRC 1267 / NRRL Y-1140 / WM37) (Yeast).